The following is a 185-amino-acid chain: Ribosome-recycling factor (185 aa).

Belongs to the RRF family.

The protein resides in the cytoplasm. Its function is as follows. Responsible for the release of ribosomes from messenger RNA at the termination of protein biosynthesis. May increase the efficiency of translation by recycling ribosomes from one round of translation to another. This Streptococcus thermophilus (strain CNRZ 1066) protein is Ribosome-recycling factor.